A 387-amino-acid chain; its full sequence is MADQANQPTVLHKLGGQFHLSSSFSEGVRARNICPSFSPYERRFATRNYMTQSLWGPSMSVSGGINVPVMPTPLFANAPAEKGGKNFMIDFMMGGVSAAVSKTAAAPIERVKLLIQNQDEMIKSGRLSEPYKGIADCFKRTIKDEGFSSLWRGNTANVIRYFPTQALNFAFKDYFKRLFNFKKDRDGYWKWFAGNLASGGAAGASSLFFVYSLDYARTRLANDAKAAKGGGDRQFNGLVDVYRKTLKSDGIAGLYRGFNISCVGIIVYRGLYFGLYDSIKPVVLTGSLQDNFFASFALGWLITNGAGLASYPIDTVRRRMMMTSGEAVKYKSSLDAFQQILKKEGPKSLFKGAGANILRAIAGAGVLSGYDQLQILFFGKKYGSGGA.

Residues 1–77 constitute a mitochondrion transit peptide; it reads MADQANQPTV…PVMPTPLFAN (77 aa). Solcar repeat units lie at residues 85–178, 190–282, and 290–376; these read KNFM…FKRL, KWFA…IKPV, and DNFF…LQIL. A run of 5 helical transmembrane segments spans residues 87 to 114, 155 to 179, 188 to 208, 258 to 279, and 293 to 313; these read FMIDFMMGGVSAAVSKTAAAPIERVKLL, TANVIRYFPTQALNFAFKDYFKRLF, YWKWFAGNLASGGAAGASSLF, FNISCVGIIVYRGLYFGLYDSI, and FASFALGWLITNGAGLASYPI. Arg-160 and Lys-172 together coordinate ADP. Residue Arg-317 participates in ADP binding. The important for transport activity stretch occupies residues 317–322; it reads RRRMMM. A Nucleotide carrier signature motif motif is present at residues 317–322; the sequence is RRRMMM. A helical membrane pass occupies residues 353 to 373; the sequence is AGANILRAIAGAGVLSGYDQL.

It belongs to the mitochondrial carrier (TC 2.A.29) family. In terms of assembly, monomer.

The protein localises to the mitochondrion inner membrane. The catalysed reaction is ADP(in) + ATP(out) = ADP(out) + ATP(in). The matrix-open state (m-state) is inhibited by the membrane-permeable bongkrekic acid (BKA). The cytoplasmic-open state (c-state) is inhibited by the membrane-impermeable toxic inhibitor carboxyatractyloside (CATR). ADP:ATP antiporter that mediates import of ADP into the mitochondrial matrix for ATP synthesis, and export of ATP out to fuel the cell. Cycles between the cytoplasmic-open state (c-state) and the matrix-open state (m-state): operates by the alternating access mechanism with a single substrate-binding site intermittently exposed to either the cytosolic (c-state) or matrix (m-state) side of the inner mitochondrial membrane. The sequence is that of ADP,ATP carrier protein 2, mitochondrial (ANT2) from Zea mays (Maize).